A 206-amino-acid chain; its full sequence is Protein GrpE (206 aa).

The span at 1-14 (MDKKNEQQEVREEN) shows a compositional bias: basic and acidic residues. The disordered stretch occupies residues 1-56 (MDKKNEQQEVREENDTSINQESETQVELEEEVVNEECETSSEKTDEKEVDDENVTD). The span at 24–39 (TQVELEEEVVNEECET) shows a compositional bias: acidic residues.

Belongs to the GrpE family. Homodimer.

It is found in the cytoplasm. Its function is as follows. Participates actively in the response to hyperosmotic and heat shock by preventing the aggregation of stress-denatured proteins, in association with DnaK and GrpE. It is the nucleotide exchange factor for DnaK and may function as a thermosensor. Unfolded proteins bind initially to DnaJ; upon interaction with the DnaJ-bound protein, DnaK hydrolyzes its bound ATP, resulting in the formation of a stable complex. GrpE releases ADP from DnaK; ATP binding to DnaK triggers the release of the substrate protein, thus completing the reaction cycle. Several rounds of ATP-dependent interactions between DnaJ, DnaK and GrpE are required for fully efficient folding. This Clostridioides difficile (strain 630) (Peptoclostridium difficile) protein is Protein GrpE.